A 132-amino-acid chain; its full sequence is Translation initiation factor 5A (132 aa).

The residue at position 36 (lysine 36) is a Hypusine.

The protein belongs to the eIF-5A family.

It is found in the cytoplasm. Its function is as follows. Functions by promoting the formation of the first peptide bond. In Pyrobaculum islandicum (strain DSM 4184 / JCM 9189 / GEO3), this protein is Translation initiation factor 5A (eIF5A).